A 356-amino-acid polypeptide reads, in one-letter code: tRNA N6-adenosine threonylcarbamoyltransferase (356 aa).

Fe cation contacts are provided by His-115 and His-119. Substrate-binding positions include 138–142 (LVSGG), Asp-171, Gly-184, and Asn-283. Residue Asp-311 coordinates Fe cation.

The protein belongs to the KAE1 / TsaD family. Fe(2+) serves as cofactor.

The protein resides in the cytoplasm. It carries out the reaction L-threonylcarbamoyladenylate + adenosine(37) in tRNA = N(6)-L-threonylcarbamoyladenosine(37) in tRNA + AMP + H(+). Required for the formation of a threonylcarbamoyl group on adenosine at position 37 (t(6)A37) in tRNAs that read codons beginning with adenine. Is involved in the transfer of the threonylcarbamoyl moiety of threonylcarbamoyl-AMP (TC-AMP) to the N6 group of A37, together with TsaE and TsaB. TsaD likely plays a direct catalytic role in this reaction. This Prochlorococcus marinus (strain SARG / CCMP1375 / SS120) protein is tRNA N6-adenosine threonylcarbamoyltransferase.